The following is a 382-amino-acid chain: ATP phosphoribosyltransferase regulatory subunit (382 aa).

This sequence belongs to the class-II aminoacyl-tRNA synthetase family. HisZ subfamily. Heteromultimer composed of HisG and HisZ subunits.

It is found in the cytoplasm. It functions in the pathway amino-acid biosynthesis; L-histidine biosynthesis; L-histidine from 5-phospho-alpha-D-ribose 1-diphosphate: step 1/9. In terms of biological role, required for the first step of histidine biosynthesis. May allow the feedback regulation of ATP phosphoribosyltransferase activity by histidine. This Lacticaseibacillus casei (strain BL23) (Lactobacillus casei) protein is ATP phosphoribosyltransferase regulatory subunit.